Reading from the N-terminus, the 362-residue chain is Serine/threonine-protein kinase SRK2D (362 aa).

The Protein kinase domain occupies 23 to 279; the sequence is YDFVKDIGSG…IPEITSDKWF (257 aa). Residues 29 to 37 and Lys-52 each bind ATP; that span reads IGSGNFGVA. Asp-142 functions as the Proton acceptor in the catalytic mechanism.

It belongs to the protein kinase superfamily. Ser/Thr protein kinase family. In terms of assembly, interacts with ABI1. Interacts with I-2, TOPP1 and TOPP2. Interacts with FREE1 (via C-terminus). In terms of tissue distribution, expressed in seeds, seedlings, roots (especially in tips), stems, leaves, shoots, flowers and siliques.

It catalyses the reaction L-seryl-[protein] + ATP = O-phospho-L-seryl-[protein] + ADP + H(+). It carries out the reaction L-threonyl-[protein] + ATP = O-phospho-L-threonyl-[protein] + ADP + H(+). Functionally, together with SRK2I, key component and activator of the abscisic acid (ABA) signaling pathway that regulates numerous ABA responses, such as seed germination, Pro accumulation, root growth inhibition, dormancy and seedling growth, and, to a lesser extent, stomatal closure. In response to ABA, phosphorylates the ESCRT-I complex component FREE1, which is required for ABA-induced FREE1 nuclear import. This is Serine/threonine-protein kinase SRK2D (SRK2D) from Arabidopsis thaliana (Mouse-ear cress).